Here is an 87-residue protein sequence, read N- to C-terminus: Small ribosomal subunit protein bS20 (87 aa).

The segment at 1–26 is disordered; it reads MANIKSAKKRAVQSEKARKHNASRRS.

Belongs to the bacterial ribosomal protein bS20 family.

Binds directly to 16S ribosomal RNA. The polypeptide is Small ribosomal subunit protein bS20 (Klebsiella pneumoniae (strain 342)).